The primary structure comprises 803 residues: Ras GTPase-activating protein 4B (803 aa).

2 consecutive C2 domains span residues 1–105 (MAKR…SGWA) and 116–232 (VQGE…EGWF). The Ca(2+) site is built by aspartate 21, aspartate 27, aspartate 74, aspartate 76, serine 79, aspartate 82, aspartate 149, aspartate 155, aspartate 202, aspartate 204, serine 207, and aspartate 210. A Ras-GAP domain is found at 318 to 546 (GLAKDFLDLL…AQLKDFITKL (229 aa)). The region spanning 566–673 (PPVKEGPLFI…WLSALRKVSI (108 aa)) is the PH domain. The Btk-type zinc finger occupies 675–711 (NTGLLGSYHPGVFRGDKWSCCHQKEKTGQGCDKTRSR). Histidine 683, cysteine 694, cysteine 695, and cysteine 705 together coordinate Zn(2+). Positions 781-803 (EAHSSSPAGSPPSEPNCLLELQT) are disordered.

The cofactor is Ca(2+).

The protein resides in the cytoplasm. It localises to the cytosol. Its subcellular location is the cell membrane. Its function is as follows. Ca(2+)-dependent Ras GTPase-activating protein, that may play a role in the Ras-MAPK pathway. This is Ras GTPase-activating protein 4B (RASA4B) from Homo sapiens (Human).